Here is a 1703-residue protein sequence, read N- to C-terminus: Protein TIC 214 (1703 aa).

Helical transmembrane passes span 39–61 (YYGF…TFFL), 67–87 (GIIC…SIYC), 90–110 (LYVM…YMFY), 138–158 (LLLD…NPVL), 174–194 (FFLT…INSI), and 220–240 (FSIL…VPLI). Disordered stretches follow at residues 615–643 (GPRK…KERE) and 1431–1494 (TKEP…WKSK). Positions 618–660 (KGKLEDKEKEKEKAAQTQTEVKKEREKEKEERVIKRFQNQSDF) form a coiled coil. The segment covering 619–643 (GKLEDKEKEKEKAAQTQTEVKKERE) has biased composition (basic and acidic residues).

This sequence belongs to the TIC214 family. As to quaternary structure, part of the Tic complex.

It localises to the plastid. The protein localises to the chloroplast inner membrane. In terms of biological role, involved in protein precursor import into chloroplasts. May be part of an intermediate translocation complex acting as a protein-conducting channel at the inner envelope. In Psilotum nudum (Whisk fern), this protein is Protein TIC 214.